The sequence spans 255 residues: uncharacterized protein (255 aa).

2 helical membrane-spanning segments follow: residues 2-22 (LLPA…YGVL) and 168-188 (VASV…FNLF).

It localises to the cell membrane. This is an uncharacterized protein from Mycobacterium tuberculosis (strain ATCC 25618 / H37Rv).